We begin with the raw amino-acid sequence, 358 residues long: Glutamine synthetase (358 aa).

The 80-residue stretch at 26 to 105 (ILAEYIWIDG…VLAECWNADG (80 aa)) folds into the GS beta-grasp domain. One can recognise a GS catalytic domain in the interval 112-358 (HRHECAKIME…IMMETICGGI (247 aa)).

This sequence belongs to the glutamine synthetase family. As to quaternary structure, homooctamer.

It is found in the cytoplasm. The enzyme catalyses L-glutamate + NH4(+) + ATP = L-glutamine + ADP + phosphate + H(+). In Tuber borchii (White truffle), this protein is Glutamine synthetase (GLN1).